Here is a 543-residue protein sequence, read N- to C-terminus: Exodeoxyribonuclease 7 large subunit (543 aa).

The interval 498-543 is disordered; that stretch reads VTGEGDKASPPPQAASATTTPAPGRPNPLPKSPKKSEPPAGQGSLF.

Belongs to the XseA family. As to quaternary structure, heterooligomer composed of large and small subunits.

The protein localises to the cytoplasm. It carries out the reaction Exonucleolytic cleavage in either 5'- to 3'- or 3'- to 5'-direction to yield nucleoside 5'-phosphates.. In terms of biological role, bidirectionally degrades single-stranded DNA into large acid-insoluble oligonucleotides, which are then degraded further into small acid-soluble oligonucleotides. The polypeptide is Exodeoxyribonuclease 7 large subunit (Allorhizobium ampelinum (strain ATCC BAA-846 / DSM 112012 / S4) (Agrobacterium vitis (strain S4))).